The sequence spans 627 residues: UvrABC system protein C (627 aa).

The 80-residue stretch at proline 26–valine 105 folds into the GIY-YIG domain. Residues glutamine 215–leucine 250 form the UVR domain.

This sequence belongs to the UvrC family. As to quaternary structure, interacts with UvrB in an incision complex.

The protein resides in the cytoplasm. Functionally, the UvrABC repair system catalyzes the recognition and processing of DNA lesions. UvrC both incises the 5' and 3' sides of the lesion. The N-terminal half is responsible for the 3' incision and the C-terminal half is responsible for the 5' incision. In Nostoc sp. (strain PCC 7120 / SAG 25.82 / UTEX 2576), this protein is UvrABC system protein C.